The following is a 475-amino-acid chain: TOM1-like protein 1 (475 aa).

One can recognise a VHS domain in the interval 22–154 (ATFAGVQTED…DLLKKGVQFP (133 aa)). A disordered region spans residues 155–175 (PLDGEPETKQEAGQISPSRPT). Over residues 165 to 175 (EAGQISPSRPT) the composition is skewed to polar residues. Serine 170 is subject to Phosphoserine. Positions 199 to 287 (EQIGKLHSEL…AILGYERFTR (89 aa)) constitute a GAT domain. Residues 296–317 (KRNPTEANQTSSEPSAPSCDLL) are disordered. Residues 300–310 (TEANQTSSEPS) are compositionally biased toward polar residues. Serine 313 is modified (phosphoserine). An interaction with GRB2 region spans residues 392-395 (YDNF). The SH3-binding signature appears at 421 to 425 (LPPLP). Residues 442 to 445 (YEVM) form an interaction with PIK3R1 region. Tyrosine 458 carries the phosphotyrosine modification. The SH2-binding motif lies at 458–461 (YEEI).

It belongs to the TOM1 family. In terms of assembly, interacts with the SH2 and SH3 domains of FYN when phosphorylated. Also interacts with GRB2 and PIK3R1 when phosphorylated. Interacts with LYN. Post-translationally, phosphorylated on tyrosines by FYN and LYN.

The protein localises to the golgi apparatus. The protein resides in the golgi stack. Its subcellular location is the endosome membrane. It localises to the cytoplasm. It is found in the membrane. Probable adapter protein involved in signaling pathways. Interacts with the SH2 and SH3 domains of various signaling proteins when it is phosphorylated. May promote FYN activation, possibly by disrupting intramolecular SH3-dependent interactions. This is TOM1-like protein 1 (Tom1l1) from Rattus norvegicus (Rat).